Consider the following 329-residue polypeptide: Strigolactones hydrolase CXE15 (329 aa).

The short motif at 83–85 (HGG) is the Involved in the stabilization of the negatively charged intermediate by the formation of the oxyanion hole element. The (-)-2'-epi-GR24 site is built by Gly-85, Gly-86, Ser-169, and Ser-170. Ser-169 serves as the catalytic Nucleophile. Catalysis depends on residues Glu-271 and His-302.

This sequence belongs to the 'GDXG' lipolytic enzyme family. As to expression, expressed in axillary buds, leaves, stems, hypocotyls, flowers, siliques, and vasculatures of shoots and roots.

Its subcellular location is the nucleus. The protein resides in the cytoplasm. It is found in the cytosol. The enzyme catalyses (-)-2'-epi-GR24 + H2O = (-)-2'-epi-GR24 ABC-rings + 5-hydroxy-3-methylfuran-2(5H)-one. It carries out the reaction 5-deoxystrigol + H2O = 5-deoxystrigol ABC-rings + 5-hydroxy-3-methylfuran-2(5H)-one. The catalysed reaction is orobanchol + H2O = orobanchol ABC-rings + 5-hydroxy-3-methylfuran-2(5H)-one. Its function is as follows. Binds to strigolactones (SLs) such as (-)-2'-epi-GR24(4DO), 5-deoxystrigol (5DS) and orobanchol, and catalyzes their hydrolysis; SL are phytohormones controlling shoot branching and communications between plants and microorganisms. Promotes shoot branching by dampening SL-inhibited axillary bud outgrowth. In Arabidopsis thaliana (Mouse-ear cress), this protein is Strigolactones hydrolase CXE15.